The primary structure comprises 166 residues: Large ribosomal subunit protein uL10 (166 aa).

It belongs to the universal ribosomal protein uL10 family. Part of the ribosomal stalk of the 50S ribosomal subunit. The N-terminus interacts with L11 and the large rRNA to form the base of the stalk. The C-terminus forms an elongated spine to which L12 dimers bind in a sequential fashion forming a multimeric L10(L12)X complex.

Functionally, forms part of the ribosomal stalk, playing a central role in the interaction of the ribosome with GTP-bound translation factors. The sequence is that of Large ribosomal subunit protein uL10 from Streptococcus pyogenes serotype M28 (strain MGAS6180).